We begin with the raw amino-acid sequence, 109 residues long: VPVVMAGVLGIYGLIIAVIISTGINPKAKPYYLFDGYAHLSSGLACGLAGLAAGMAIGIVGDAGVRANAQQPKLFVGMILILIFAEALALYGLIVGIILSSRAGQSRAD.

A helical membrane pass occupies residues valine 1–isoleucine 20. The Lumenal segment spans residues serine 21–histidine 39. The helical transmembrane segment at leucine 40–glycine 61 threads the bilayer. Residues aspartate 62–lysine 73 lie on the Cytoplasmic side of the membrane. A helical membrane pass occupies residues leucine 74–leucine 99. The Lumenal portion of the chain corresponds to serine 100–aspartate 109.

This sequence belongs to the V-ATPase proteolipid subunit family. In terms of assembly, V-ATPase is a heteromultimeric enzyme composed of a peripheral catalytic V1 complex (main components: subunits A, B, C, D, E, and F) attached to an integral membrane V0 proton pore complex (main component: the proteolipid protein; which is present as a hexamer that forms the proton-conducting pore). As to expression, high expression in the mesocotyl tip of etiolated seedlings compared to the base.

The protein localises to the vacuole membrane. In terms of biological role, proton-conducting pore forming subunit of the membrane integral V0 complex of vacuolar ATPase. V-ATPase is responsible for acidifying a variety of intracellular compartments in eukaryotic cells. This chain is V-type proton ATPase 16 kDa proteolipid subunit, found in Zea mays (Maize).